The following is a 95-amino-acid chain: Aspartyl/glutamyl-tRNA(Asn/Gln) amidotransferase subunit C (95 aa).

The protein belongs to the GatC family. In terms of assembly, heterotrimer of A, B and C subunits.

The enzyme catalyses L-glutamyl-tRNA(Gln) + L-glutamine + ATP + H2O = L-glutaminyl-tRNA(Gln) + L-glutamate + ADP + phosphate + H(+). The catalysed reaction is L-aspartyl-tRNA(Asn) + L-glutamine + ATP + H2O = L-asparaginyl-tRNA(Asn) + L-glutamate + ADP + phosphate + 2 H(+). Functionally, allows the formation of correctly charged Asn-tRNA(Asn) or Gln-tRNA(Gln) through the transamidation of misacylated Asp-tRNA(Asn) or Glu-tRNA(Gln) in organisms which lack either or both of asparaginyl-tRNA or glutaminyl-tRNA synthetases. The reaction takes place in the presence of glutamine and ATP through an activated phospho-Asp-tRNA(Asn) or phospho-Glu-tRNA(Gln). This chain is Aspartyl/glutamyl-tRNA(Asn/Gln) amidotransferase subunit C, found in Azotobacter vinelandii (strain DJ / ATCC BAA-1303).